A 252-amino-acid chain; its full sequence is Ribosomal RNA large subunit methyltransferase E (252 aa).

Residues G48, W50, D68, D84, and D107 each coordinate S-adenosyl-L-methionine. K147 functions as the Proton acceptor in the catalytic mechanism. The region spanning 194–252 is the TRAM domain; that stretch reads PVREGDTLEVEIDNLGDEGDGVAKVDGYTLFVSGAEPGDAPEVRVTDVKPRFGFAETLE.

The protein belongs to the class I-like SAM-binding methyltransferase superfamily. RNA methyltransferase RlmE family.

Its subcellular location is the cytoplasm. The enzyme catalyses uridine(2552) in 23S rRNA + S-adenosyl-L-methionine = 2'-O-methyluridine(2552) in 23S rRNA + S-adenosyl-L-homocysteine + H(+). Its function is as follows. Specifically methylates the uridine in position 2552 of 23S rRNA at the 2'-O position of the ribose in the fully assembled 50S ribosomal subunit. This Natronomonas pharaonis (strain ATCC 35678 / DSM 2160 / CIP 103997 / JCM 8858 / NBRC 14720 / NCIMB 2260 / Gabara) (Halobacterium pharaonis) protein is Ribosomal RNA large subunit methyltransferase E.